We begin with the raw amino-acid sequence, 669 residues long: CoB--CoM heterodisulfide reductase iron-sulfur subunit A 1 (669 aa).

153-176 (GGGIAGIQAALDLADQGFKVYLVE) is a binding site for FAD. A non-standard amino acid (selenocysteine) is located at residue Sec200. 4 consecutive 4Fe-4S ferredoxin-type domains span residues 239 to 270 (KKPR…FDLG), 287 to 318 (LVYT…FDQE), 584 to 613 (ITAT…MVEK), and 617 to 646 (RVAE…LRYY). 16 residues coordinate [4Fe-4S] cluster: Cys249, Cys252, Cys255, Cys259, Cys296, Cys299, Cys302, Cys306, Cys593, Cys596, Cys599, Cys603, Cys626, Cys629, Cys632, and Cys636.

It belongs to the HdrA family. As to quaternary structure, the ferredoxin:CoB-CoM heterodisulfide reductase is composed of three subunits; HdrA, HdrB and HdrC. The cofactor is [4Fe-4S] cluster. Requires FAD as cofactor.

Its pathway is cofactor metabolism; coenzyme M-coenzyme B heterodisulfide reduction; coenzyme B and coenzyme M from coenzyme M-coenzyme B heterodisulfide: step 1/1. Part of a complex that catalyzes the reversible reduction of CoM-S-S-CoB to the thiol-coenzymes H-S-CoM (coenzyme M) and H-S-CoB (coenzyme B). This is CoB--CoM heterodisulfide reductase iron-sulfur subunit A 1 (hdrA1) from Methanopyrus kandleri (strain AV19 / DSM 6324 / JCM 9639 / NBRC 100938).